The following is a 772-amino-acid chain: Cellulosomal-scaffolding protein B (772 aa).

Residues 1–80 (DPSKSFDSAI…TTFVAGGVNL (80 aa)) enclose the Cohesin 1 domain. A linker (Pro/Thr-rich) region spans residues 81–93 (GSSVPTTQPNVPS). One can recognise a Cohesin 2 domain in the interval 94-240 (DGVVVEIGKV…VNVGNATPTK (147 aa)). Residues 235-276 (NATPTKGATPTNTATPTKSATATPPGHSVPTNTPTNTPANTP) show a composition bias toward low complexity. Disordered stretches follow at residues 235–277 (NATP…NTPV) and 438–464 (VVPSTQPVTTPPATTKPPATTIPPSDD). The segment at 241-272 (GATPTNTATPTKSATATPPGHSVPTNTPTNTP) is linker (Pro/Thr-rich). Residues 277-435 (VSGNLKVEFY…GVLVWGKEPG (159 aa)) form the CBM3 domain. A compositionally biased stretch (low complexity) spans 438–461 (VVPSTQPVTTPPATTKPPATTIPP). Residues 440–461 (PSTQPVTTPPATTKPPATTIPP) form a linker (Pro/Thr-rich) region. The Cohesin 3 domain occupies 462-607 (SDDPNAIKIK…ETDLINGGVL (146 aa)). One can recognise a Dockerin domain in the interval 704–771 (IMMWVGDIVK…FGATSSDYDA (68 aa)).

Post-translationally, O-glycosylated on most but not all Thr residues of the linker units.

It is found in the secreted. Acts as a scaffolding protein in the cellulosome. It promotes binding of cellulose to the catalytic domains of the cellulolytic enzymes probably through the binding of the nine repeated domains with dockerin domains present in catalytic subunits of the cellulosome. This Acetivibrio thermocellus (Hungateiclostridium thermocellum) protein is Cellulosomal-scaffolding protein B (cipB).